A 359-amino-acid chain; its full sequence is 3-dehydroquinate synthase (359 aa).

NAD(+)-binding positions include 69–74 (DGEQHK), 103–107 (GVIGD), 127–128 (TT), Lys140, Lys149, and 167–170 (TLDT). Zn(2+) is bound by residues Glu182, His245, and His262.

Belongs to the sugar phosphate cyclases superfamily. Dehydroquinate synthase family. Co(2+) is required as a cofactor. Requires Zn(2+) as cofactor. It depends on NAD(+) as a cofactor.

It localises to the cytoplasm. It catalyses the reaction 7-phospho-2-dehydro-3-deoxy-D-arabino-heptonate = 3-dehydroquinate + phosphate. It participates in metabolic intermediate biosynthesis; chorismate biosynthesis; chorismate from D-erythrose 4-phosphate and phosphoenolpyruvate: step 2/7. Catalyzes the conversion of 3-deoxy-D-arabino-heptulosonate 7-phosphate (DAHP) to dehydroquinate (DHQ). This Nitrosococcus oceani (strain ATCC 19707 / BCRC 17464 / JCM 30415 / NCIMB 11848 / C-107) protein is 3-dehydroquinate synthase.